We begin with the raw amino-acid sequence, 214 residues long: DNA-binding protein HupB (214 aa).

Lysine 3 bears the N6-acetyllysine mark. Lysine 3 is subject to N6-succinyllysine. A phosphothreonine mark is found at threonine 43 and threonine 45. 3 positions are modified to N6-acetyllysine: lysine 72, lysine 86, and lysine 103. Positions proline 100–lysine 214 are disordered. Residues valine 102 to lysine 112 are compositionally biased toward low complexity. Position 113 is an N6-succinyllysine (lysine 113). Basic residues predominate over residues lysine 113 to lysine 214. N6-acetyllysine occurs at positions 116 and 133. N6-succinyllysine is present on lysine 142. 2 positions are modified to N6-acetyllysine: lysine 146 and lysine 167.

It belongs to the bacterial histone-like protein family. Long actinobacterial subfamily. Oligomerizes. Homodimer; the crystallized protein is missing the C-terminal 105 residues. Interacts with topoisomerase 1 (topA). Interacts with Eis. Interacts with NAD-dependent protein deacylase NPD (MRA_1161). Interacts with MRA_0812 CoA transferase. Phosphorylated in vivo on Ser and Thr-residues; the protein is degraded during purification so most sites were not identified, but at least one of Thr-43 and/or Thr-45 are modified in vivo. In vitro at least PknE, PknF and PknB phosphorylate HupB; PknE is the most active and phosphorylates many sites in vitro including Thr-43 and Thr-45. Post-translationally, acetylated on 8 Lys residues in vivo (probably by Eis). In vitro acetylated by Eis on 28 residues (strains H37Rv and H37Ra), many more than those identified in vivo. Also acetylated by MRA_0812. Deacetylated in vitro by NAD-dependent protein deacylase NPD (MRA_1161). In terms of processing, succinylated in vivo and in vitro by MRA_0812 and by Eis; only 3 residues are found to be succinylated in vivo, while 27 are modifed in vitro by MRA_0812 and 32 are succinylated by Eis. NAD-dependent protein deacylase (MRA_1161) desuccinylates this protein.

Its subcellular location is the cytoplasm. It is found in the nucleoid. The enzyme catalyses 4 Fe(2+) + O2 + 4 H(+) = 4 Fe(3+) + 2 H2O. Its activity is regulated as follows. Two trans-stilbene derivatives, 4,4'-[(E)-ethene-1,2 diylbis({5[(phenylcarbonyl)amino]benzene-2,1-diyl}sulfonylimino)] dibenzoic acid and its methoxy derivative 4,4'-[1,2-ethenediylbis({5-[(4-methoxybenzoyl)amino]-2,1phenylene}sulfonylimino)] dibenzoic acid, respectively SD1 and SD4, inhibit DNA binding with 50% inhibition at 20 uM for SD1 and 1.7 uM for SD4. SD1 and SD4 have minimal inhibitory concentrations of 400 and 800 uM on strain H37Ra respectively. Its function is as follows. A nucleoid-associated protein (NAP) that plays a role in local chromosome architecture. Binds DNA non-sequence specifically; in vitro phosphorylation of an N-terminal fragment decreases DNA-binding. Stimulates supercoiling relaxation by topoisomerase 1 (Top1, topA), at higher than 80 uM inhibits relaxation, has no effect on DNA gyrase; the effect is independent of DNA-binding. Increases the intervening strand passage activity of Top1 that occurs between the two catalytic trans-esterification reactions. Does not bind ssDNA, probably helps condense chromosomes. Binds dsDNA; in vitro acetylated protein binds 10-fold less well to DNA (note in vitro acetylated protein is more heavily modified than in vivo modified protein). In vitro acetylated protein compacts DNA less well than unmodified protein. In vitro succinylated DNA bind dsDNA less well than unmodified protein (note in vitro succinylated protein is more heavily modified than in vivo modified protein). In terms of biological role, has ferroxidase activity, converts Fe(2+) into Fe(3+). Binds Fe(3+) but not Fe(2+); prevents the generation of hydroxyl radicals by the Fenton reaction and thus protects DNA from damage. May function in iron storage. Required for biofilm formation; trimethylation by recombinant human SUV39H1 (a histone methyltransferase) inhibits biofilm formation. Probably influences transcription. RNase E and HupB jointly contribute to cellular adaptation to changing growth conditions and survival during antibiotic treatment and in the host. The sequence is that of DNA-binding protein HupB from Mycobacterium tuberculosis (strain ATCC 25177 / H37Ra).